The primary structure comprises 243 residues: Benzil reductase ((S)-benzoin forming) (243 aa).

NADP(+) contacts are provided by I6, N80, Y147, K151, and T184. Y147 functions as the Proton acceptor in the catalytic mechanism.

This sequence belongs to the short-chain dehydrogenases/reductases (SDR) family.

Its subcellular location is the cytoplasm. The enzyme catalyses (S)-benzoin + NADP(+) = benzil + NADPH + H(+). Its function is as follows. Reduces benzil stereospecifically to (S)-benzoin. In Bacillus subtilis (strain 168), this protein is Benzil reductase ((S)-benzoin forming) (yueD).